The sequence spans 498 residues: Glycerol kinase (498 aa).

Thr-12 lines the ADP pocket. ATP contacts are provided by Thr-12, Thr-13, and Ser-14. Thr-12 is a binding site for sn-glycerol 3-phosphate. Arg-16 contributes to the ADP binding site. Residues Arg-82, Glu-83, and Tyr-134 each contribute to the sn-glycerol 3-phosphate site. Glycerol-binding residues include Arg-82, Glu-83, and Tyr-134. At His-230 the chain carries Phosphohistidine; by HPr. Asp-244 is a sn-glycerol 3-phosphate binding site. Residues Asp-244 and Gln-245 each contribute to the glycerol site. Residues Thr-266 and Gly-309 each contribute to the ADP site. ATP contacts are provided by Thr-266, Gly-309, Gln-313, and Gly-410. Positions 410 and 414 each coordinate ADP.

Belongs to the FGGY kinase family. Homotetramer and homodimer (in equilibrium). In terms of processing, the phosphoenolpyruvate-dependent sugar phosphotransferase system (PTS), including enzyme I, and histidine-containing protein (HPr) are required for the phosphorylation, which leads to the activation of the enzyme.

It carries out the reaction glycerol + ATP = sn-glycerol 3-phosphate + ADP + H(+). Its pathway is polyol metabolism; glycerol degradation via glycerol kinase pathway; sn-glycerol 3-phosphate from glycerol: step 1/1. Its activity is regulated as follows. Activated by phosphorylation and inhibited by fructose 1,6-bisphosphate (FBP). Functionally, key enzyme in the regulation of glycerol uptake and metabolism. Catalyzes the phosphorylation of glycerol to yield sn-glycerol 3-phosphate. The protein is Glycerol kinase of Staphylococcus aureus (strain MRSA252).